The primary structure comprises 133 residues: Osteocrin (133 aa).

The N-terminal stretch at 1–27 (MLDWRLASAHFILAVTLTLWSSGKVLS) is a signal peptide. The residue at position 132 (Arg-132) is an Arginine amide.

The protein belongs to the Osteocrin family. Interacts with NPR3. Enriched in neocortical regions of the developing cerebral cortex. Not expressed in other compartments of the neocortical wall or in brain regions such as the hippocampus, striatum, mediodorsal nucleus of the thalamus and cerebellum. Also expressed in bone. In developing neonatal rib bone, present at high level in osteoblasts on bone-forming surfaces, in newly incorporated osteocytes and in some late hypertrophic chondrocytes (at protein level). In adult bone, localizes specifically to osteoblasts and young osteocytes at bone-forming sites (at protein level).

It is found in the secreted. In terms of biological role, hormone that acts as a regulator of dendritic growth in the developing cerebral cortex in response to sensory experience. Induced in the brain following membrane depolarization and inhibits dendritic branching in neurons of the developing cortex. Probably acts by binding to natriuretic peptide receptor NPR3/NPR-C, thereby preventing binding between NPR3/NPR-C and natriuretic peptides, leading to increase cGMP production. The protein is Osteocrin of Homo sapiens (Human).